The chain runs to 174 residues: Large ribosomal subunit protein uL10 (174 aa).

This sequence belongs to the universal ribosomal protein uL10 family. As to quaternary structure, part of the ribosomal stalk of the 50S ribosomal subunit. The N-terminus interacts with L11 and the large rRNA to form the base of the stalk. The C-terminus forms an elongated spine to which L12 dimers bind in a sequential fashion forming a multimeric L10(L12)X complex.

Its function is as follows. Forms part of the ribosomal stalk, playing a central role in the interaction of the ribosome with GTP-bound translation factors. The chain is Large ribosomal subunit protein uL10 from Rubrobacter xylanophilus (strain DSM 9941 / JCM 11954 / NBRC 16129 / PRD-1).